The following is a 141-amino-acid chain: Nucleoside diphosphate kinase (141 aa).

Positions 11, 59, 87, 93, 104, and 114 each coordinate ATP. Catalysis depends on histidine 117, which acts as the Pros-phosphohistidine intermediate.

Belongs to the NDK family. In terms of assembly, homotetramer. Mg(2+) serves as cofactor.

Its subcellular location is the cytoplasm. It catalyses the reaction a 2'-deoxyribonucleoside 5'-diphosphate + ATP = a 2'-deoxyribonucleoside 5'-triphosphate + ADP. The enzyme catalyses a ribonucleoside 5'-diphosphate + ATP = a ribonucleoside 5'-triphosphate + ADP. Its function is as follows. Major role in the synthesis of nucleoside triphosphates other than ATP. The ATP gamma phosphate is transferred to the NDP beta phosphate via a ping-pong mechanism, using a phosphorylated active-site intermediate. This is Nucleoside diphosphate kinase from Orientia tsutsugamushi (strain Boryong) (Rickettsia tsutsugamushi).